The primary structure comprises 259 residues: 3-deoxy-manno-octulosonate cytidylyltransferase (259 aa).

This sequence belongs to the KdsB family.

It is found in the cytoplasm. It catalyses the reaction 3-deoxy-alpha-D-manno-oct-2-ulosonate + CTP = CMP-3-deoxy-beta-D-manno-octulosonate + diphosphate. The protein operates within nucleotide-sugar biosynthesis; CMP-3-deoxy-D-manno-octulosonate biosynthesis; CMP-3-deoxy-D-manno-octulosonate from 3-deoxy-D-manno-octulosonate and CTP: step 1/1. Its pathway is bacterial outer membrane biogenesis; lipopolysaccharide biosynthesis. Its function is as follows. Activates KDO (a required 8-carbon sugar) for incorporation into bacterial lipopolysaccharide in Gram-negative bacteria. This Actinobacillus succinogenes (strain ATCC 55618 / DSM 22257 / CCUG 43843 / 130Z) protein is 3-deoxy-manno-octulosonate cytidylyltransferase.